Here is a 108-residue protein sequence, read N- to C-terminus: MNERDDILQAVYEVILDRKGALPESSYTASLFHKGIDKILKKVGEEATEVIIAGKGGKREEIVYETADLLFHTLVLLGHYDIAPADVYNELRRRFGTSGHAEKASRNE.

The protein belongs to the PRA-PH family.

It localises to the cytoplasm. It carries out the reaction 1-(5-phospho-beta-D-ribosyl)-ATP + H2O = 1-(5-phospho-beta-D-ribosyl)-5'-AMP + diphosphate + H(+). It functions in the pathway amino-acid biosynthesis; L-histidine biosynthesis; L-histidine from 5-phospho-alpha-D-ribose 1-diphosphate: step 2/9. In Geobacter sulfurreducens (strain ATCC 51573 / DSM 12127 / PCA), this protein is Phosphoribosyl-ATP pyrophosphatase.